Reading from the N-terminus, the 386-residue chain is MTSENPLLALREKISALDEKLLALLAERRELAVEVGKAKLLSHRPVRDIDRERDLLERLITLGKAHHLDAHYITRLFQLIIEDSVLTQQALLQQHLNKINPHSARIAFLGPKGSYSHLAARQYAARHFEQFIESGCAKFADIFNQVETGQADYAVVPIENTSSGAINDVYDLLQHTSLSIVGEMTLTIDHCLLVSGTTDLSTINTVYSHPQPFQQCSKFLNRYPHWKIEYTESTSAAMEKVAQAKSPHVAALGSEAGGTLYGLQVLERIEANQRQNFTRFVVLARKAINVSDQVPAKTTLLMATGQQAGALVEALLVLRNHNLIMTRLESRPIHGNPWEEMFYLDIQANLESAEMQKALKELGEITRSMKVLGCYPSENVVPVDPT.

A Chorismate mutase domain is found at 1 to 92 (MTSENPLLAL…DSVLTQQALL (92 aa)). Residues R11, R28, K39, D48, E52, S84, and Q88 each contribute to the substrate site. The Prephenate dehydratase domain occupies 105 to 285 (RIAFLGPKGS…NFTRFVVLAR (181 aa)). The ACT domain occupies 299–376 (TLLMATGQQA…RSMKVLGCYP (78 aa)).

Its subcellular location is the cytoplasm. It catalyses the reaction chorismate = prephenate. It carries out the reaction prephenate + H(+) = 3-phenylpyruvate + CO2 + H2O. Its pathway is amino-acid biosynthesis; L-phenylalanine biosynthesis; phenylpyruvate from prephenate: step 1/1. It functions in the pathway metabolic intermediate biosynthesis; prephenate biosynthesis; prephenate from chorismate: step 1/1. Functionally, catalyzes the Claisen rearrangement of chorismate to prephenate and the decarboxylation/dehydration of prephenate to phenylpyruvate. The sequence is that of Bifunctional chorismate mutase/prephenate dehydratase (pheA) from Escherichia coli O157:H7.